The primary structure comprises 454 residues: MGRTYIVEETVGQYLSNIGLQGKAFVSGLLIGQCSSQKDYVILATRTPPKEEQSENLKHLKAKLDNLDEEWATEHACQVSRMLPGGLLVLGVFIITTLELANDFQNALRRLMFAVEKSINRKRLWNFTEEEVSERVTLHICASTKKKIFCRTYDIHDPKSSARPADWKYQSGLSSSWLSLECTVHINIHIPLSATSVSYTLEKNTKNGLTRWAKEIENGVYLINGQVKDEDCDLLEGQKKSRGNTQATSHSFDVRVLTQLLLNSDHRSTATVQICSGSVNLKGAVKCRAYIHSSKPKVKDAVQAVKRDILNTVADRCEILFEDLLLNEIPEKKDSEKEFHVLPYRVFVPLPGSTVMLCDYKFDDESAEEIRDHFMEMLDHTIKIEDLEIAEETNTACMSSSMNSQASLDNTDDEQPKQPIKTTMLLKIQQNIGVIAAFTVAVLAAGISFHYFSD.

2 helical membrane-spanning segments follow: residues 82-102 and 432-452; these read MLPGGLLVLGVFIITTLELAN and IGVIAAFTVAVLAAGISFHYF.

This sequence belongs to the ODR-4 family.

It is found in the membrane. Its function is as follows. May play a role in the trafficking of a subset of G-protein coupled receptors. The chain is Protein odr-4 homolog (ODR4) from Pongo abelii (Sumatran orangutan).